Here is a 137-residue protein sequence, read N- to C-terminus: ATP synthase epsilon chain, chloroplastic (137 aa).

This sequence belongs to the ATPase epsilon chain family. In terms of assembly, F-type ATPases have 2 components, CF(1) - the catalytic core - and CF(0) - the membrane proton channel. CF(1) has five subunits: alpha(3), beta(3), gamma(1), delta(1), epsilon(1). CF(0) has three main subunits: a, b and c.

The protein resides in the plastid. The protein localises to the chloroplast thylakoid membrane. In terms of biological role, produces ATP from ADP in the presence of a proton gradient across the membrane. This is ATP synthase epsilon chain, chloroplastic from Agrostis stolonifera (Creeping bentgrass).